Here is a 421-residue protein sequence, read N- to C-terminus: O-glycoside alpha-1,2-mannosyltransferase homolog 5 (421 aa).

Glutamate 318 functions as the Nucleophile in the catalytic mechanism.

This sequence belongs to the glycosyltransferase 15 family.

It is found in the cytoplasm. Functionally, probable mannosyltransferase involved in O-glycosylation of cell wall and secreted proteins. The protein is O-glycoside alpha-1,2-mannosyltransferase homolog 5 (omh5) of Schizosaccharomyces pombe (strain 972 / ATCC 24843) (Fission yeast).